The chain runs to 233 residues: 28 kDa ribonucleoprotein, chloroplastic (233 aa).

Positions 1-16 (CVAQTSEWEQEGSTNA) are enriched in polar residues. The segment at 1 to 52 (CVAQTSEWEQEGSTNAVLEGESDPEGAVSWGSETQVSDEGGVEGGQGFSEPP) is disordered. 2 RRM domains span residues 55 to 133 (AKLF…KAAP) and 149 to 227 (CRVY…VAEE).

Its subcellular location is the plastid. The protein localises to the chloroplast. Its function is as follows. Probably involved in the 3'-end processing of chloroplast mRNA's. This Spinacia oleracea (Spinach) protein is 28 kDa ribonucleoprotein, chloroplastic.